A 350-amino-acid polypeptide reads, in one-letter code: Transmembrane protein 115 (350 aa).

At 1 to 19 (MQRALPGARQHLGAILASA) the chain is on the cytoplasmic side. Positions 1-205 (MQRALPGARQ…FGLLSSWVYL (205 aa)) are mediates homooligomerization. A helical membrane pass occupies residues 20 to 40 (SVVVKALCAVVLFLYLLSFAV). Residues 41–97 (DTGCLAVTPGYLFPPNFWIWTLATHGLMEQHVWDVAISLATVVVAGRLLEPLWGALE) lie on the Lumenal side of the membrane. The helical transmembrane segment at 98–118 (LLIFFSVVNVSVGLLGALAYL) threads the bilayer. Topologically, residues 119–126 (LTYMASFN) are cytoplasmic. A helical transmembrane segment spans residues 127-147 (LVYLFTIRIHGALGFLGGVLV). Residues 148-165 (ALKQTMGDCVVLRVPQVR) lie on the Lumenal side of the membrane. Residues 166–186 (VSVVPMLLLALLLLLRLATLL) traverse the membrane as a helical segment. Residues 187–350 (QSPALASYGF…LITLETAPLL (164 aa)) lie on the Cytoplasmic side of the membrane. Residues 206 to 229 (RFYQRHSRGRGDMADHFAFATFFP) form a mediates localization to the Golgi region. A disordered region spans residues 299 to 350 (EDQSAWPSMDDDEEEAGAKTDSPLPLEEASTPPGKVTVPESSLITLETAPLL). Thr-329 is subject to Phosphothreonine.

The protein belongs to the TMEM115 family. In terms of assembly, homooligomer. Interacts with COPB1. May interact with LMAN1. Interacts with the COG complex; probably through COG3.

The protein localises to the golgi apparatus. It localises to the golgi stack membrane. May play a role in retrograde transport of proteins from the Golgi to the endoplasmic reticulum. May indirectly play a role in protein glycosylation in the Golgi. The polypeptide is Transmembrane protein 115 (Mus musculus (Mouse)).